We begin with the raw amino-acid sequence, 154 residues long: 6,7-dimethyl-8-ribityllumazine synthase (154 aa).

5-amino-6-(D-ribitylamino)uracil contacts are provided by residues phenylalanine 22, 57-59 (AYE), and 81-83 (AVI). 86–87 (GT) lines the (2S)-2-hydroxy-3-oxobutyl phosphate pocket. The active-site Proton donor is the histidine 89. Phenylalanine 114 lines the 5-amino-6-(D-ribitylamino)uracil pocket. Arginine 128 provides a ligand contact to (2S)-2-hydroxy-3-oxobutyl phosphate.

Belongs to the DMRL synthase family. Forms an icosahedral capsid composed of 60 subunits, arranged as a dodecamer of pentamers.

The enzyme catalyses (2S)-2-hydroxy-3-oxobutyl phosphate + 5-amino-6-(D-ribitylamino)uracil = 6,7-dimethyl-8-(1-D-ribityl)lumazine + phosphate + 2 H2O + H(+). It functions in the pathway cofactor biosynthesis; riboflavin biosynthesis; riboflavin from 2-hydroxy-3-oxobutyl phosphate and 5-amino-6-(D-ribitylamino)uracil: step 1/2. Catalyzes the formation of 6,7-dimethyl-8-ribityllumazine by condensation of 5-amino-6-(D-ribitylamino)uracil with 3,4-dihydroxy-2-butanone 4-phosphate. This is the penultimate step in the biosynthesis of riboflavin. The protein is 6,7-dimethyl-8-ribityllumazine synthase of Colwellia psychrerythraea (strain 34H / ATCC BAA-681) (Vibrio psychroerythus).